The chain runs to 118 residues: Hydrogenase maturation factor HypA (118 aa).

H2 provides a ligand contact to Ni(2+). Residues C73, C76, C93, and C96 each contribute to the Zn(2+) site.

Belongs to the HypA/HybF family.

In terms of biological role, involved in the maturation of [NiFe] hydrogenases. Required for nickel insertion into the metal center of the hydrogenase. This Lawsonia intracellularis (strain PHE/MN1-00) protein is Hydrogenase maturation factor HypA.